The chain runs to 365 residues: 3-dehydroquinate synthase (365 aa).

Residues 107-111 (GVIGD), 131-132 (TS), Lys144, and Lys153 contribute to the NAD(+) site. Residues Glu186, His251, and His268 each coordinate Zn(2+).

It belongs to the sugar phosphate cyclases superfamily. Dehydroquinate synthase family. The cofactor is Co(2+). Zn(2+) serves as cofactor. NAD(+) is required as a cofactor.

It is found in the cytoplasm. It catalyses the reaction 7-phospho-2-dehydro-3-deoxy-D-arabino-heptonate = 3-dehydroquinate + phosphate. The protein operates within metabolic intermediate biosynthesis; chorismate biosynthesis; chorismate from D-erythrose 4-phosphate and phosphoenolpyruvate: step 2/7. Catalyzes the conversion of 3-deoxy-D-arabino-heptulosonate 7-phosphate (DAHP) to dehydroquinate (DHQ). The chain is 3-dehydroquinate synthase from Crocosphaera subtropica (strain ATCC 51142 / BH68) (Cyanothece sp. (strain ATCC 51142)).